The following is an 86-amino-acid chain: MANIKSQKKRILTNEKARLRNNSYKSELKTLIRKVDAAVESGNKDAAAETLRTASRKLDKAVSKGVLHKNTAANKKSGLAKKVAKI.

This sequence belongs to the bacterial ribosomal protein bS20 family.

Functionally, binds directly to 16S ribosomal RNA. The sequence is that of Small ribosomal subunit protein bS20 from Kocuria rhizophila (strain ATCC 9341 / DSM 348 / NBRC 103217 / DC2201).